The following is a 387-amino-acid chain: Phosphoglycerate kinase (387 aa).

Residues 21–23 (DLN), Arg36, 59–62 (HLGR), Arg113, and Arg146 contribute to the substrate site. ATP-binding positions include Lys197, Glu314, and 340–343 (GGDT).

The protein belongs to the phosphoglycerate kinase family. As to quaternary structure, monomer.

Its subcellular location is the cytoplasm. The enzyme catalyses (2R)-3-phosphoglycerate + ATP = (2R)-3-phospho-glyceroyl phosphate + ADP. It participates in carbohydrate degradation; glycolysis; pyruvate from D-glyceraldehyde 3-phosphate: step 2/5. The sequence is that of Phosphoglycerate kinase from Enterobacter sp. (strain 638).